The following is a 261-amino-acid chain: Putative hydro-lyase Sfum_3393 (261 aa).

Belongs to the D-glutamate cyclase family.

In Syntrophobacter fumaroxidans (strain DSM 10017 / MPOB), this protein is Putative hydro-lyase Sfum_3393.